Reading from the N-terminus, the 473-residue chain is Photosystem II CP43 reaction center protein (473 aa).

Positions 1 to 14 are excised as a propeptide; the sequence is MKTLYSLRRFYHVE. Threonine 15 is modified (N-acetylthreonine). Position 15 is a phosphothreonine (threonine 15). The next 5 helical transmembrane spans lie at 69–93, 134–155, 178–200, 255–275, and 291–312; these read LFEV…PHLA, LLGP…KDRN, KALY…RKIT, KPFA…LSYS, and WFNN…ASQA. Glutamate 367 lines the [CaMn4O5] cluster pocket. The helical transmembrane segment at 447 to 471 threads the bilayer; the sequence is RARAAAAGFEKGIDRDFEPVLSMTP.

The protein belongs to the PsbB/PsbC family. PsbC subfamily. In terms of assembly, PSII is composed of 1 copy each of membrane proteins PsbA, PsbB, PsbC, PsbD, PsbE, PsbF, PsbH, PsbI, PsbJ, PsbK, PsbL, PsbM, PsbT, PsbX, PsbY, PsbZ, Psb30/Ycf12, at least 3 peripheral proteins of the oxygen-evolving complex and a large number of cofactors. It forms dimeric complexes. It depends on Binds multiple chlorophylls and provides some of the ligands for the Ca-4Mn-5O cluster of the oxygen-evolving complex. It may also provide a ligand for a Cl- that is required for oxygen evolution. PSII binds additional chlorophylls, carotenoids and specific lipids. as a cofactor.

Its subcellular location is the plastid. The protein resides in the chloroplast thylakoid membrane. Functionally, one of the components of the core complex of photosystem II (PSII). It binds chlorophyll and helps catalyze the primary light-induced photochemical processes of PSII. PSII is a light-driven water:plastoquinone oxidoreductase, using light energy to abstract electrons from H(2)O, generating O(2) and a proton gradient subsequently used for ATP formation. This chain is Photosystem II CP43 reaction center protein, found in Manihot esculenta (Cassava).